Consider the following 343-residue polypeptide: Probable dual-specificity RNA methyltransferase RlmN (343 aa).

Residue E91 is the Proton acceptor of the active site. Residues 97-326 form the Radical SAM core domain; sequence HPDRITACIS…AEIRREKGAD (230 aa). C104 and C331 are oxidised to a cystine. [4Fe-4S] cluster is bound by residues C111, C115, and C118. Residues 158 to 159, S190, 213 to 215, and N289 contribute to the S-adenosyl-L-methionine site; these read GE and SLH. The active-site S-methylcysteine intermediate is C331.

It belongs to the radical SAM superfamily. RlmN family. Requires [4Fe-4S] cluster as cofactor.

The protein resides in the cytoplasm. The enzyme catalyses adenosine(2503) in 23S rRNA + 2 reduced [2Fe-2S]-[ferredoxin] + 2 S-adenosyl-L-methionine = 2-methyladenosine(2503) in 23S rRNA + 5'-deoxyadenosine + L-methionine + 2 oxidized [2Fe-2S]-[ferredoxin] + S-adenosyl-L-homocysteine. It catalyses the reaction adenosine(37) in tRNA + 2 reduced [2Fe-2S]-[ferredoxin] + 2 S-adenosyl-L-methionine = 2-methyladenosine(37) in tRNA + 5'-deoxyadenosine + L-methionine + 2 oxidized [2Fe-2S]-[ferredoxin] + S-adenosyl-L-homocysteine. In terms of biological role, specifically methylates position 2 of adenine 2503 in 23S rRNA and position 2 of adenine 37 in tRNAs. This Thermotoga petrophila (strain ATCC BAA-488 / DSM 13995 / JCM 10881 / RKU-1) protein is Probable dual-specificity RNA methyltransferase RlmN.